Consider the following 232-residue polypeptide: Sec-independent protein translocase protein TatB (232 aa).

A helical membrane pass occupies residues 1 to 21; sequence MFDIGFGELMLLFVIGLVVLG. Disordered regions lie at residues 108 to 129 and 176 to 232; these read EPHTIHNPLVTDPEALHDGVTP and AAST…NNDR. Composition is skewed to low complexity over residues 189 to 203 and 214 to 232; these read ADSAANLATQAATPA and RAATATGPASSTSPLNNDR.

This sequence belongs to the TatB family. The Tat system comprises two distinct complexes: a TatABC complex, containing multiple copies of TatA, TatB and TatC subunits, and a separate TatA complex, containing only TatA subunits. Substrates initially bind to the TatABC complex, which probably triggers association of the separate TatA complex to form the active translocon.

Its subcellular location is the cell inner membrane. Its function is as follows. Part of the twin-arginine translocation (Tat) system that transports large folded proteins containing a characteristic twin-arginine motif in their signal peptide across membranes. Together with TatC, TatB is part of a receptor directly interacting with Tat signal peptides. TatB may form an oligomeric binding site that transiently accommodates folded Tat precursor proteins before their translocation. The protein is Sec-independent protein translocase protein TatB of Sodalis glossinidius (strain morsitans).